The chain runs to 77 residues: Conotoxin LiC42 (77 aa).

Positions 1–22 (MKLTCVLIIAVLFLTASQLITA) are cleaved as a signal peptide. The propeptide occupies 23-47 (DYSRDKQEYGAERLRDAMGKFKGSR). 3 disulfide bridges follow: cysteine 49-cysteine 62, cysteine 56-cysteine 67, and cysteine 61-cysteine 76.

This sequence belongs to the conotoxin O1 superfamily. Expressed by the venom duct.

The protein resides in the secreted. The chain is Conotoxin LiC42 from Conus lividus (Livid cone).